The following is a 119-amino-acid chain: Large ribosomal subunit protein bL19 (119 aa).

It belongs to the bacterial ribosomal protein bL19 family.

This protein is located at the 30S-50S ribosomal subunit interface and may play a role in the structure and function of the aminoacyl-tRNA binding site. The protein is Large ribosomal subunit protein bL19 of Psychromonas ingrahamii (strain DSM 17664 / CCUG 51855 / 37).